The following is a 138-amino-acid chain: Large ribosomal subunit protein bL17 (138 aa).

This sequence belongs to the bacterial ribosomal protein bL17 family. In terms of assembly, part of the 50S ribosomal subunit. Contacts protein L32.

This chain is Large ribosomal subunit protein bL17, found in Nitrobacter winogradskyi (strain ATCC 25391 / DSM 10237 / CIP 104748 / NCIMB 11846 / Nb-255).